Here is a 244-residue protein sequence, read N- to C-terminus: rRNA adenine N-6-methyltransferase (244 aa).

6 residues coordinate S-adenosyl-L-methionine: asparagine 11, isoleucine 13, glycine 38, glutamate 59, aspartate 84, and asparagine 101.

The protein belongs to the class I-like SAM-binding methyltransferase superfamily. rRNA adenine N(6)-methyltransferase family.

It carries out the reaction adenosine(2085) in 23S rRNA + 2 S-adenosyl-L-methionine = N(6)-dimethyladenosine(2085) in 23S rRNA + 2 S-adenosyl-L-homocysteine + 2 H(+). Its function is as follows. This protein produces a dimethylation of the adenine residue at position 2085 in 23S rRNA, resulting in reduced affinity between ribosomes and macrolide-lincosamide-streptogramin B antibiotics. Is involved in erythromycin resistance. The protein is rRNA adenine N-6-methyltransferase (ermGT) of Limosilactobacillus reuteri (Lactobacillus reuteri).